The following is a 524-amino-acid chain: GMP synthase [glutamine-hydrolyzing] (524 aa).

In terms of domain architecture, Glutamine amidotransferase type-1 spans 9–207; it reads RILILDFGSQ…VIHICQCIPN (199 aa). The active-site Nucleophile is C86. Active-site residues include H181 and E183. Residues 208 to 399 form the GMPS ATP-PPase domain; the sequence is WTTKHIIEDS…LGLPADLIYR (192 aa). An ATP-binding site is contributed by 235–241; that stretch reads SGGVDSA.

In terms of assembly, homodimer.

It catalyses the reaction XMP + L-glutamine + ATP + H2O = GMP + L-glutamate + AMP + diphosphate + 2 H(+). It functions in the pathway purine metabolism; GMP biosynthesis; GMP from XMP (L-Gln route): step 1/1. Its function is as follows. Catalyzes the synthesis of GMP from XMP. The protein is GMP synthase [glutamine-hydrolyzing] of Coxiella burnetii (strain CbuG_Q212) (Coxiella burnetii (strain Q212)).